Reading from the N-terminus, the 176-residue chain is ATP-dependent protease subunit HslV (176 aa).

Residue T2 is part of the active site. 3 residues coordinate Na(+): G158, C161, and T164.

Belongs to the peptidase T1B family. HslV subfamily. A double ring-shaped homohexamer of HslV is capped on each side by a ring-shaped HslU homohexamer. The assembly of the HslU/HslV complex is dependent on binding of ATP.

The protein resides in the cytoplasm. The enzyme catalyses ATP-dependent cleavage of peptide bonds with broad specificity.. Allosterically activated by HslU binding. Protease subunit of a proteasome-like degradation complex believed to be a general protein degrading machinery. The chain is ATP-dependent protease subunit HslV from Pasteurella multocida (strain Pm70).